A 169-amino-acid chain; its full sequence is Putative outer membrane protein BBA03 (169 aa).

The protein resides in the cell outer membrane. This Borreliella burgdorferi (strain ATCC 35210 / DSM 4680 / CIP 102532 / B31) (Borrelia burgdorferi) protein is Putative outer membrane protein BBA03.